The primary structure comprises 104 residues: Guanidinium exporter (104 aa).

Topologically, residues 1–3 (MSW) are cytoplasmic. A helical membrane pass occupies residues 4–26 (IILFVAGLLEIVWAVGLKYTHGF). The Periplasmic portion of the chain corresponds to 27 to 32 (TRLTPS). Residues 33 to 50 (IITISAMIVSMGMLSYAM) form a helical membrane-spanning segment. Residues 51–54 (KGLP) lie on the Cytoplasmic side of the membrane. Residues 55–77 (AGTAYAIWTGIGAVGTAIFGIIV) traverse the membrane as a helical segment. The Periplasmic segment spans residues 78-83 (FGESAN). A helical transmembrane segment spans residues 84 to 103 (IYRLLSLAMIVFGIIGLKLA). Serine 104 is a topological domain (cytoplasmic).

The protein belongs to the drug/metabolite transporter (DMT) superfamily. Small multidrug resistance (SMR) (TC 2.A.7.1) family. Gdx/SugE subfamily.

The protein resides in the cell inner membrane. Functionally, guanidinium ion exporter. Couples guanidinium export to the proton motive force, exchanging one guanidinium ion for two protons. The chain is Guanidinium exporter from Proteus vulgaris.